Reading from the N-terminus, the 100-residue chain is uncharacterized protein (100 aa).

2 consecutive transmembrane segments (helical) span residues 17–37 (IIIL…SVSF) and 78–98 (MVDK…TIPF).

The protein resides in the endoplasmic reticulum membrane. This is an uncharacterized protein from Saccharomyces cerevisiae (strain ATCC 204508 / S288c) (Baker's yeast).